The primary structure comprises 91 residues: Small ribosomal subunit protein uS15 (91 aa).

The protein belongs to the universal ribosomal protein uS15 family. As to quaternary structure, part of the 30S ribosomal subunit. Forms a bridge to the 50S subunit in the 70S ribosome, contacting the 23S rRNA.

In terms of biological role, one of the primary rRNA binding proteins, it binds directly to 16S rRNA where it helps nucleate assembly of the platform of the 30S subunit by binding and bridging several RNA helices of the 16S rRNA. Functionally, forms an intersubunit bridge (bridge B4) with the 23S rRNA of the 50S subunit in the ribosome. The protein is Small ribosomal subunit protein uS15 of Rickettsia canadensis (strain McKiel).